A 112-amino-acid chain; its full sequence is cAMP-regulated phosphoprotein 19 (112 aa).

Low complexity predominate over residues 1–11 (MSAESPEPASA). The disordered stretch occupies residues 1-48 (MSAESPEPASAEEQKEMEDKVISPEKAEEAKLKARYPHLGQKPGGSDF). The residue at position 2 (serine 2) is an N-acetylserine. Residues 12–32 (EEQKEMEDKVISPEKAEEAKL) show a composition bias toward basic and acidic residues. A phosphoserine; by GWL mark is found at serine 62 and serine 104. Residues 73–112 (KNKQLPTAAPDKTEVTGDHIPTPQDLPQRKPSLVASKLAG) form a disordered region. Residue serine 104 is modified to Phosphoserine; by PKA.

Belongs to the endosulfine family. Interacts (when phosphorylated at Ser-62) with PPP2R2D. Phosphorylation at Ser-62 by MASTL/GWL during mitosis is essential for interaction with PPP2R2D (PR55-delta) and subsequent inactivation of PP2A.

It is found in the cytoplasm. Its function is as follows. Protein phosphatase inhibitor that specifically inhibits protein phosphatase 2A (PP2A) during mitosis. Inhibition of PP2A is enhanced when ARPP19 is phosphorylated. When phosphorylated at Ser-62 during mitosis, specifically interacts with PPP2R2D (PR55-delta) and inhibits its activity, leading to inactivation of PP2A, an essential condition to keep cyclin-B1-CDK1 activity high during M phase. The chain is cAMP-regulated phosphoprotein 19 (ARPP19) from Gallus gallus (Chicken).